The following is a 672-amino-acid chain: Flap endonuclease 1 (672 aa).

Residues 1–106 are N-domain; sequence MGIKGLTKFI…SELEKRGEKR (106 aa). Position 34 (D34) interacts with Mg(2+). Residues R47 and R72 each contribute to the DNA site. Mg(2+) is bound by residues D88, E160, E162, D181, and D183. The tract at residues 124 to 266 is I-domain; it reads EIKKQSGRTV…KTAYNLIKEY (143 aa). E160 contacts DNA. Positions 244 and 246 each coordinate DNA. D246 lines the Mg(2+) pocket. The tract at residues 349–357 is interaction with PCNA; sequence TQRRLDNFF. The segment at 371-610 is disordered; that stretch reads ETKKEQTLPA…EDSPNSYNNI (240 aa). Composition is skewed to basic and acidic residues over residues 413–493, 502–526, and 535–548; these read MKEE…KKSL, DSDKESESGNIIKNEKQNMDDEKIN, and DHSRIRHTENKDNI. Residues 549 to 584 are compositionally biased toward low complexity; that stretch reads SDINNNNNNNNSSSNNNNISNNHFNSVSSNSTFNSS. A compositionally biased stretch (basic and acidic residues) spans 587–603; sequence LKSEDTLKSNSPLKEDS.

It belongs to the XPG/RAD2 endonuclease family. FEN1 subfamily. In terms of assembly, interacts with PCNA1 and PCNA2. Three molecules of FEN1 bind to one PCNA trimer with each molecule binding to one PCNA monomer. PCNA stimulates the nuclease activity without altering cleavage specificity. Mg(2+) is required as a cofactor. In terms of processing, phosphorylated. Phosphorylation upon DNA damage induces relocalization to the nuclear plasma.

Its subcellular location is the nucleus. The protein resides in the nucleolus. The protein localises to the nucleoplasm. It is found in the mitochondrion. Its function is as follows. Structure-specific nuclease with 5'-flap endonuclease and 5'-3' exonuclease activities involved in DNA replication and repair. During DNA replication, cleaves the 5'-overhanging flap structure that is generated by displacement synthesis when DNA polymerase encounters the 5'-end of a downstream Okazaki fragment. It enters the flap from the 5'-end and then tracks to cleave the flap base, leaving a nick for ligation. Also involved in the long patch base excision repair (LP-BER) pathway, by cleaving within the apurinic/apyrimidinic (AP) site-terminated flap. Acts as a genome stabilization factor that prevents flaps from equilibrating into structures that lead to duplications and deletions. Also possesses 5'-3' exonuclease activity on nicked or gapped double-stranded DNA, and exhibits RNase H activity. Also involved in replication and repair of rDNA and in repairing mitochondrial DNA. The polypeptide is Flap endonuclease 1 (Plasmodium falciparum (isolate 3D7)).